The primary structure comprises 133 residues: Fatty acid-binding protein, heart (133 aa).

Alanine 2 carries the post-translational modification N-acetylalanine. Position 8 is a phosphothreonine (threonine 8). Tyrosine 20 is modified (phosphotyrosine; by Tyr-kinases). Residue serine 23 is modified to Phosphoserine. A Phosphothreonine modification is found at threonine 30. Serine 83 carries the post-translational modification Phosphoserine. 127-129 (RTY) is a (9Z)-octadecenoate binding site. 127–129 (RTY) is a hexadecanoate binding site. Residue 127–129 (RTY) participates in octadecanoate binding.

The protein belongs to the calycin superfamily. Fatty-acid binding protein (FABP) family.

Its subcellular location is the cytoplasm. In terms of biological role, FABPs are thought to play a role in the intracellular transport of long-chain fatty acids and their acyl-CoA esters. The protein is Fatty acid-binding protein, heart (Fabp3) of Mus musculus (Mouse).